Reading from the N-terminus, the 466-residue chain is tRNA(Ile)-lysidine synthase (466 aa).

42–47 (SGGVDS) lines the ATP pocket.

This sequence belongs to the tRNA(Ile)-lysidine synthase family.

Its subcellular location is the cytoplasm. The catalysed reaction is cytidine(34) in tRNA(Ile2) + L-lysine + ATP = lysidine(34) in tRNA(Ile2) + AMP + diphosphate + H(+). Ligates lysine onto the cytidine present at position 34 of the AUA codon-specific tRNA(Ile) that contains the anticodon CAU, in an ATP-dependent manner. Cytidine is converted to lysidine, thus changing the amino acid specificity of the tRNA from methionine to isoleucine. This chain is tRNA(Ile)-lysidine synthase, found in Anaplasma marginale (strain St. Maries).